The primary structure comprises 154 residues: Aspartate carbamoyltransferase regulatory chain (154 aa).

Cysteine 110, cysteine 115, cysteine 136, and cysteine 139 together coordinate Zn(2+).

Belongs to the PyrI family. In terms of assembly, contains catalytic and regulatory chains. Zn(2+) is required as a cofactor.

In terms of biological role, involved in allosteric regulation of aspartate carbamoyltransferase. In Halobacterium salinarum (strain ATCC 700922 / JCM 11081 / NRC-1) (Halobacterium halobium), this protein is Aspartate carbamoyltransferase regulatory chain.